The primary structure comprises 660 residues: Poly [ADP-ribose] polymerase 2-A (660 aa).

An SAP 1 domain is found at 2–36 (SARLRVEELRAELQRRGLDASGNKPVLVRRLDAAI). The tract at residues 40–92 (EEEEAAVSAAAKEEADAGGVVDGEGNGEDKRKRKRRGDGEDVDNSESDAAKLE) is disordered. The Nuclear localization signal signature appears at 69–75 (KRKRKRR). The SAP 2 domain occupies 91–125 (LEGMSYRELQALAKSRGLAANGSKKEVIERLLCAP). Residues 179–281 (TYHVLQVWFL…KSFECYARKY (103 aa)) form the WGR domain. In terms of domain architecture, PARP alpha-helical spans 308-426 (ETKLETRIAS…EIEIATKLLE (119 aa)). Residues 434–660 (DPLYARYKQL…LHVSFNFKKR (227 aa)) enclose the PARP catalytic domain.

It belongs to the ARTD/PARP family.

It localises to the nucleus. The enzyme catalyses NAD(+) + (ADP-D-ribosyl)n-acceptor = nicotinamide + (ADP-D-ribosyl)n+1-acceptor + H(+).. It catalyses the reaction L-aspartyl-[protein] + NAD(+) = 4-O-(ADP-D-ribosyl)-L-aspartyl-[protein] + nicotinamide. The catalysed reaction is L-glutamyl-[protein] + NAD(+) = 5-O-(ADP-D-ribosyl)-L-glutamyl-[protein] + nicotinamide. Its function is as follows. Involved in the base excision repair (BER) pathway, by catalyzing the poly(ADP-ribosyl)ation of a limited number of acceptor proteins involved in chromatin architecture and in DNA metabolism. This modification follows DNA damages and appears as an obligatory step in a detection/signaling pathway leading to the reparation of DNA strand breaks. The sequence is that of Poly [ADP-ribose] polymerase 2-A (PARP2-A) from Oryza sativa subsp. japonica (Rice).